The chain runs to 155 residues: Large ribosomal subunit protein uL16 (155 aa).

Belongs to the universal ribosomal protein uL16 family. As to quaternary structure, part of the 50S ribosomal subunit.

Functionally, binds 23S rRNA and is also seen to make contacts with the A and possibly P site tRNAs. The sequence is that of Large ribosomal subunit protein uL16 from Synechococcus sp. (strain CC9311).